The primary structure comprises 388 residues: Succinate--CoA ligase [ADP-forming] subunit beta (388 aa).

Residues 9–244 (KQLFARSGLP…QSQEDPREAQ (236 aa)) enclose the ATP-grasp domain. ATP-binding positions include Lys-46, 53–55 (GRG), Glu-99, Thr-102, and Glu-107. The Mg(2+) site is built by Asn-199 and Asp-213. Substrate is bound by residues Asn-264 and 321–323 (GIV).

It belongs to the succinate/malate CoA ligase beta subunit family. Heterotetramer of two alpha and two beta subunits. Mg(2+) is required as a cofactor.

It carries out the reaction succinate + ATP + CoA = succinyl-CoA + ADP + phosphate. The catalysed reaction is GTP + succinate + CoA = succinyl-CoA + GDP + phosphate. The protein operates within carbohydrate metabolism; tricarboxylic acid cycle; succinate from succinyl-CoA (ligase route): step 1/1. Its function is as follows. Succinyl-CoA synthetase functions in the citric acid cycle (TCA), coupling the hydrolysis of succinyl-CoA to the synthesis of either ATP or GTP and thus represents the only step of substrate-level phosphorylation in the TCA. The beta subunit provides nucleotide specificity of the enzyme and binds the substrate succinate, while the binding sites for coenzyme A and phosphate are found in the alpha subunit. This chain is Succinate--CoA ligase [ADP-forming] subunit beta, found in Cronobacter sakazakii (strain ATCC BAA-894) (Enterobacter sakazakii).